The sequence spans 304 residues: Ribosomal RNA small subunit methyltransferase H (304 aa).

S-adenosyl-L-methionine-binding positions include 37-39, Asp-57, Phe-79, Asp-100, and His-107; that span reads AGH.

It belongs to the methyltransferase superfamily. RsmH family.

The protein localises to the cytoplasm. It catalyses the reaction cytidine(1402) in 16S rRNA + S-adenosyl-L-methionine = N(4)-methylcytidine(1402) in 16S rRNA + S-adenosyl-L-homocysteine + H(+). Its function is as follows. Specifically methylates the N4 position of cytidine in position 1402 (C1402) of 16S rRNA. This Bacteroides thetaiotaomicron (strain ATCC 29148 / DSM 2079 / JCM 5827 / CCUG 10774 / NCTC 10582 / VPI-5482 / E50) protein is Ribosomal RNA small subunit methyltransferase H.